The primary structure comprises 158 residues: Cytochrome c-type biogenesis protein CcmE (158 aa).

Topologically, residues 1 to 8 (MNIRRRRR) are cytoplasmic. A helical; Signal-anchor for type II membrane protein transmembrane segment spans residues 9-29 (LLVVVAILVGLGLATGLVMYA). Topologically, residues 30 to 158 (LRSNIDLFYT…GLLNVSEPTR (129 aa)) are periplasmic. Residues His-130 and Tyr-134 each coordinate heme.

This sequence belongs to the CcmE/CycJ family.

The protein localises to the cell inner membrane. Its function is as follows. Heme chaperone required for the biogenesis of c-type cytochromes. Transiently binds heme delivered by CcmC and transfers the heme to apo-cytochromes in a process facilitated by CcmF and CcmH. This chain is Cytochrome c-type biogenesis protein CcmE, found in Tatumella citrea (Pantoea citrea).